We begin with the raw amino-acid sequence, 244 residues long: 5-oxoprolinase subunit A (244 aa).

The protein belongs to the LamB/PxpA family. In terms of assembly, forms a complex composed of PxpA, PxpB and PxpC.

It carries out the reaction 5-oxo-L-proline + ATP + 2 H2O = L-glutamate + ADP + phosphate + H(+). Functionally, catalyzes the cleavage of 5-oxoproline to form L-glutamate coupled to the hydrolysis of ATP to ADP and inorganic phosphate. The chain is 5-oxoprolinase subunit A from Salmonella dublin (strain CT_02021853).